The following is a 609-amino-acid chain: Glutamine--fructose-6-phosphate aminotransferase [isomerizing] (609 aa).

Cysteine 2 serves as the catalytic Nucleophile; for GATase activity. The Glutamine amidotransferase type-2 domain maps to 2 to 219 (CGIFGYLGNQ…SGEFAIVSQG (218 aa)). SIS domains follow at residues 285-426 (LSDV…VHGA) and 458-599 (WAQP…IDCP). Catalysis depends on lysine 604, which acts as the For Fru-6P isomerization activity.

In terms of assembly, homodimer.

It is found in the cytoplasm. It catalyses the reaction D-fructose 6-phosphate + L-glutamine = D-glucosamine 6-phosphate + L-glutamate. In terms of biological role, catalyzes the first step in hexosamine metabolism, converting fructose-6P into glucosamine-6P using glutamine as a nitrogen source. The protein is Glutamine--fructose-6-phosphate aminotransferase [isomerizing] of Chlamydia pneumoniae (Chlamydophila pneumoniae).